The primary structure comprises 416 residues: Serine hydroxymethyltransferase (416 aa).

Residues L118 and 122–124 (GHL) each bind (6S)-5,6,7,8-tetrahydrofolate. K226 is modified (N6-(pyridoxal phosphate)lysine). Residues E242 and 350 to 352 (SPF) contribute to the (6S)-5,6,7,8-tetrahydrofolate site.

Belongs to the SHMT family. As to quaternary structure, homodimer. It depends on pyridoxal 5'-phosphate as a cofactor.

Its subcellular location is the cytoplasm. The enzyme catalyses (6R)-5,10-methylene-5,6,7,8-tetrahydrofolate + glycine + H2O = (6S)-5,6,7,8-tetrahydrofolate + L-serine. Its pathway is one-carbon metabolism; tetrahydrofolate interconversion. It functions in the pathway amino-acid biosynthesis; glycine biosynthesis; glycine from L-serine: step 1/1. Its function is as follows. Catalyzes the reversible interconversion of serine and glycine with tetrahydrofolate (THF) serving as the one-carbon carrier. This reaction serves as the major source of one-carbon groups required for the biosynthesis of purines, thymidylate, methionine, and other important biomolecules. Also exhibits THF-independent aldolase activity toward beta-hydroxyamino acids, producing glycine and aldehydes, via a retro-aldol mechanism. This is Serine hydroxymethyltransferase from Helicobacter pylori (strain G27).